We begin with the raw amino-acid sequence, 205 residues long: Urease accessory protein UreG 1 (205 aa).

A GTP-binding site is contributed by 14 to 21; sequence GPVGSGKT.

It belongs to the SIMIBI class G3E GTPase family. UreG subfamily. In terms of assembly, homodimer. UreD, UreF and UreG form a complex that acts as a GTP-hydrolysis-dependent molecular chaperone, activating the urease apoprotein by helping to assemble the nickel containing metallocenter of UreC. The UreE protein probably delivers the nickel.

The protein resides in the cytoplasm. Facilitates the functional incorporation of the urease nickel metallocenter. This process requires GTP hydrolysis, probably effectuated by UreG. The sequence is that of Urease accessory protein UreG 1 from Methylobacterium radiotolerans (strain ATCC 27329 / DSM 1819 / JCM 2831 / NBRC 15690 / NCIMB 10815 / 0-1).